The chain runs to 274 residues: 3-methyl-2-oxobutanoate hydroxymethyltransferase (274 aa).

D49 and D88 together coordinate Mg(2+). 3-methyl-2-oxobutanoate contacts are provided by residues 49–50 (DS), D88, and K118. Mg(2+) is bound at residue E120. The Proton acceptor role is filled by E187.

Belongs to the PanB family. Homodecamer; pentamer of dimers. Requires Mg(2+) as cofactor.

The protein resides in the cytoplasm. It carries out the reaction 3-methyl-2-oxobutanoate + (6R)-5,10-methylene-5,6,7,8-tetrahydrofolate + H2O = 2-dehydropantoate + (6S)-5,6,7,8-tetrahydrofolate. Its pathway is cofactor biosynthesis; (R)-pantothenate biosynthesis; (R)-pantoate from 3-methyl-2-oxobutanoate: step 1/2. In terms of biological role, catalyzes the reversible reaction in which hydroxymethyl group from 5,10-methylenetetrahydrofolate is transferred onto alpha-ketoisovalerate to form ketopantoate. This is 3-methyl-2-oxobutanoate hydroxymethyltransferase from Paramagnetospirillum magneticum (strain ATCC 700264 / AMB-1) (Magnetospirillum magneticum).